A 364-amino-acid polypeptide reads, in one-letter code: 2-oxoglutarate-dependent dioxygenase imqE (364 aa).

Residues 73–92 form a disordered region; that stretch reads KQKAAHPPGPNPQRGWSGIG. One can recognise a Fe2OG dioxygenase domain in the interval 199-315; that stretch reads DGSELRLLHY…RWSAAYFFKA (117 aa). Positions 227, 229, and 287 each coordinate Fe cation. Arg-306 is a 2-oxoglutarate binding site.

The protein belongs to the iron/ascorbate-dependent oxidoreductase family. Fe(2+) is required as a cofactor.

It functions in the pathway secondary metabolite biosynthesis. 2-oxoglutarate-dependent dioxygenase; part of the gene cluster that mediates the biosynthesis of imizoquins A to D, tripeptide-derived alkaloids that serve a protective role against oxidative stress that are essential for normal germination. ImqB is a canonical three-module NRPS that assembles the tripeptide backbone of the imizoquins via condensation of Trp, Tyr, and Leu-derived precursors. N-methylation by imqF and phenol oxidation by imqC, followed by cyclization via the FAD-dependent oxidase imqH carry out the three-step transformation of L-tyrosine into tetrahydroisoquinoline. Importantly, this sequence requires the presence of a free amine in the tyrosine moiety, indicating that isoquinoline formation occurs prior to peptide bond formation. The imidazolidin-4-one ring of imizoquins could form following additional oxidation of the methyl-derived bridgehead carbon by imqH. Lastly, O-methylation by imqG and leucine hydroxylation by imqE complete biosynthesis of the imizoquins. This chain is 2-oxoglutarate-dependent dioxygenase imqE, found in Aspergillus flavus (strain ATCC 200026 / FGSC A1120 / IAM 13836 / NRRL 3357 / JCM 12722 / SRRC 167).